The following is a 34-amino-acid chain: Photosystem II reaction center protein Psb30 (34 aa).

Residues 6–26 (VIGQLTSLAMIVLVGPAVIVV) form a helical membrane-spanning segment.

This sequence belongs to the Psb30/Ycf12 family. In terms of assembly, PSII is composed of 1 copy each of membrane proteins PsbA, PsbB, PsbC, PsbD, PsbE, PsbF, PsbH, PsbI, PsbJ, PsbK, PsbL, PsbM, PsbT, PsbX, PsbY, PsbZ, Psb30/Ycf12, peripheral proteins of the oxygen-evolving complex and a large number of cofactors. It forms dimeric complexes.

It localises to the plastid. The protein resides in the chloroplast thylakoid membrane. Functionally, a core subunit of photosystem II (PSII), probably helps stabilize the reaction center. This is Photosystem II reaction center protein Psb30 from Gracilaria tenuistipitata var. liui (Red alga).